The chain runs to 464 residues: 3-isopropylmalate dehydratase large subunit (464 aa).

The [4Fe-4S] cluster site is built by Cys345, Cys405, and Cys408.

This sequence belongs to the aconitase/IPM isomerase family. LeuC type 1 subfamily. In terms of assembly, heterodimer of LeuC and LeuD. It depends on [4Fe-4S] cluster as a cofactor.

The enzyme catalyses (2R,3S)-3-isopropylmalate = (2S)-2-isopropylmalate. It functions in the pathway amino-acid biosynthesis; L-leucine biosynthesis; L-leucine from 3-methyl-2-oxobutanoate: step 2/4. Functionally, catalyzes the isomerization between 2-isopropylmalate and 3-isopropylmalate, via the formation of 2-isopropylmaleate. This Flavobacterium johnsoniae (strain ATCC 17061 / DSM 2064 / JCM 8514 / BCRC 14874 / CCUG 350202 / NBRC 14942 / NCIMB 11054 / UW101) (Cytophaga johnsonae) protein is 3-isopropylmalate dehydratase large subunit.